A 309-amino-acid polypeptide reads, in one-letter code: MITIIGSGRVGTAAAVIMGLLKIDTKILLIDIIKGLPQGEALDMNHMSSILGLDVEYFGSNEYKDMEGSDLVIVTAGLPRKPGMTREQLLEANAKIVSEIGKEIKRYAPNSVVILTTNPLDAMTYVMWKSTGFPRERVIGFSGVLDAGRLAYYAAKKLGVSPASILPIVLGQHGESMFPVPSKSFIHGVPLSRLLTEEQLKEVVEETVKAGARITELRGFSSNWGPGAGLALMAEAVKRDTKRSLIASVVLQGEYDVRDVPVEVPVILGRSGVLKVLEIELSAEERQKFMQSVEAIRKLIASIPSNYLQ.

NAD(+)-binding positions include 6 to 11 and D31; that span reads GSGRVG. Substrate-binding residues include R80 and R86. NAD(+)-binding positions include N93 and 116-118; that span reads TTN. Positions 118 and 149 each coordinate substrate. H173 functions as the Proton acceptor in the catalytic mechanism.

This sequence belongs to the LDH/MDH superfamily. In terms of assembly, homotetramer.

It carries out the reaction (S)-malate + NAD(+) = oxaloacetate + NADH + H(+). Its function is as follows. Catalyzes the reversible oxidation of malate to oxaloacetate. Exhibits higher specific activity for oxaloacetate reduction than for malate oxidation in vitro. Has a strong preference for NAD. Can use NADPH for oxaloacetate reduction, but activity decreases more than 90%. No activity detected with NADP(+) and malate. This chain is Malate dehydrogenase, found in Pyrobaculum islandicum (strain DSM 4184 / JCM 9189 / GEO3).